We begin with the raw amino-acid sequence, 883 residues long: DNA mismatch repair protein MutS (883 aa).

633–640 (GPNMGGKS) is a binding site for ATP.

It belongs to the DNA mismatch repair MutS family.

In terms of biological role, this protein is involved in the repair of mismatches in DNA. It is possible that it carries out the mismatch recognition step. This protein has a weak ATPase activity. The protein is DNA mismatch repair protein MutS of Bordetella parapertussis (strain 12822 / ATCC BAA-587 / NCTC 13253).